The sequence spans 765 residues: Zinc metalloproteinase nas-37 (765 aa).

Residues 1 to 22 (MKSQACLKVCLALIGLVSIVST) form the signal peptide. The propeptide occupies 23-114 (AYIANDVVSD…SESNSPRSRR (92 aa)). The region spanning 115 to 308 (QAHPDPRNFW…AKMINTRYCS (194 aa)) is the Peptidase M12A domain. Asn126 carries an N-linked (GlcNAc...) asparagine glycan. Intrachain disulfides connect Cys156–Cys307, Cys177–Cys196, Cys311–Cys331, Cys333–Cys342, Cys350–Cys374, and Cys400–Cys420. A Zn(2+)-binding site is contributed by His204. Glu205 is an active-site residue. 2 residues coordinate Zn(2+): His208 and His214. The region spanning 303–343 (NTRYCSNVCQRSLPCLNEGYTDPNNCGRCRCPSGYGGTYCE) is the EGF-like domain. In terms of domain architecture, CUB spans 350–458 (CGGSLTASSS…RGFTLKYRAI (109 aa)). The disordered stretch occupies residues 513–573 (KYSSEELYDP…TRPTPTTTVA (61 aa)). Low complexity-rich tracts occupy residues 526 to 545 (LSPS…DASP) and 562 to 573 (ALTRPTPTTTVA). A TSP type-1 domain is found at 576 to 627 (TASWSAWGEWSACSQPCGGCGTKTRVRACYGGNQVCPGSNLDRESCNAHACA). Intrachain disulfides connect Cys588-Cys621, Cys592-Cys626, and Cys604-Cys611.

Zn(2+) is required as a cofactor. In terms of tissue distribution, expressed in hypodermal cells. Not expressed in the seam cells in L1 to L3 larvae, but it is present in seam cells of L4 larvae. Also expressed in attachment points of the cuticle at the anterior end of larvae, in the arcade cells in the mouth, the anterior pharynx, the amphid socket cells, and in the rectal epithelial cells at the posterior end of the larvae (at protein level).

The protein localises to the secreted. Its function is as follows. Metalloprotease. Plays an essential role in molting, a process during larval stages in which a new cuticle is formed and the old cuticle is shed. Required during ecdysis, the opening of the cuticle to allow the worm to escape. The chain is Zinc metalloproteinase nas-37 (nas-37) from Caenorhabditis elegans.